Reading from the N-terminus, the 528-residue chain is MLSFKFAKSASKVIGNRNFHSSSASLANTTKLFINGKFVESKTKEWLEVRNPATQELVTKVPVSTKEEMEAAVKAASDAFPAWRDTSVSNRSRIISNYKNLINKNMDKIAAIITEEQGKTLPDAKGDVFRGLEVVEHSVNVASLMMGETVENVSKNVDIYSYVQPLGVCAGITPFNFPAMIPLWMFPLAIACGNTFVLKPSERVPSASMFLVQLAQEAGVPDGVVNVIHGGKEAVNFICDAPEVRAISFVGADQAGRHIHARGTANGKRVQSNMAAKNHATIVPDAHKERTLDALTGAAFGASGQRCMALSAAVFVGESKNWIPELAERAKKLKVAGGAAPGADLGPVISAASKQRIHELIQSGIDEGAKCILDGRNVVVDPEFSKGNFVGPTILTDVKPHMRCYKEEIFGPVLVCLNVDTVDQAIQLINANPYGNGTAVFTSSGAVARKYQREIDVGQVGINLPIPVPLPFFSFTGSRGSFVGAGHFYGKTGVQFFTQIKTITSNWRDDDISHGVSSSMNMPILGKN.

The transit peptide at 1 to 26 (MLSFKFAKSASKVIGNRNFHSSSASL) directs the protein to the mitochondrion. Residues Phe175, Lys199, Glu202, and Arg203 each contribute to the NAD(+) site. The active-site Nucleophile is Cys307. Glu408 provides a ligand contact to NAD(+).

This sequence belongs to the aldehyde dehydrogenase family. Homotetramer.

It localises to the mitochondrion. The enzyme catalyses 2-methyl-3-oxopropanoate + NAD(+) + CoA + H2O = propanoyl-CoA + hydrogencarbonate + NADH + H(+). It catalyses the reaction 3-oxopropanoate + NAD(+) + CoA + H2O = hydrogencarbonate + acetyl-CoA + NADH + H(+). Probable malonate and methylmalonate semialdehyde dehydrogenase involved in the catabolism of valine, thymine, and compounds catabolized by way of beta-alanine, including uracil and cytidine. The protein is Probable methylmalonate-semialdehyde/malonate-semialdehyde dehydrogenase [acylating], mitochondrial (mmsdh) of Dictyostelium discoideum (Social amoeba).